We begin with the raw amino-acid sequence, 222 residues long: Protein DEHYDRATION-INDUCED 19 homolog 6 (222 aa).

Phosphoserine is present on serine 116.

It belongs to the Di19 family. Post-translationally, phosphorylated in vitro by CPK3 or CPK11. As to expression, expressed in seedlings, roots, leaves, stems, flowers and siliques.

Its subcellular location is the nucleus. This Arabidopsis thaliana (Mouse-ear cress) protein is Protein DEHYDRATION-INDUCED 19 homolog 6 (DI19-6).